The sequence spans 412 residues: Thyroxine-binding globulin (412 aa).

A signal peptide spans 1 to 16 (MPLFLYMVLLVLGIHC). N-linked (GlcNAc...) asparagine glycosylation is found at asparagine 20, asparagine 35, asparagine 98, asparagine 164, and asparagine 252. Thyroxine contacts are provided by asparagine 292 and lysine 395.

This sequence belongs to the serpin family. In terms of tissue distribution, expressed by the liver and secreted in plasma.

Its subcellular location is the secreted. Functionally, major thyroid hormone transport protein in serum. The protein is Thyroxine-binding globulin (SERPINA7) of Sus scrofa (Pig).